A 317-amino-acid chain; its full sequence is tRNA pseudouridine synthase B (317 aa).

Asp47 (nucleophile) is an active-site residue.

It belongs to the pseudouridine synthase TruB family. Type 1 subfamily.

It carries out the reaction uridine(55) in tRNA = pseudouridine(55) in tRNA. Responsible for synthesis of pseudouridine from uracil-55 in the psi GC loop of transfer RNAs. This Shewanella sp. (strain MR-4) protein is tRNA pseudouridine synthase B.